The following is a 275-amino-acid chain: tRNA pseudouridine synthase A (275 aa).

Asp-72 (nucleophile) is an active-site residue. Residue Tyr-133 participates in substrate binding.

It belongs to the tRNA pseudouridine synthase TruA family. Homodimer.

It carries out the reaction uridine(38/39/40) in tRNA = pseudouridine(38/39/40) in tRNA. In terms of biological role, formation of pseudouridine at positions 38, 39 and 40 in the anticodon stem and loop of transfer RNAs. The sequence is that of tRNA pseudouridine synthase A from Gluconobacter oxydans (strain 621H) (Gluconobacter suboxydans).